Here is an 894-residue protein sequence, read N- to C-terminus: Nitrate reductase [NADPH] (894 aa).

Residues 1 to 79 form a disordered region; sequence MAVKSQLGVT…PEDLKTPDHR (79 aa). The segment covering 7 to 16 has biased composition (polar residues); it reads LGVTYTTKTF. Over residues 69–79 the composition is skewed to basic and acidic residues; sequence LPEDLKTPDHR. Residue cysteine 169 participates in Mo-molybdopterin binding. The 76-residue stretch at 535 to 610 folds into the Cytochrome b5 heme-binding domain; the sequence is VRIISLEELK…MPQYHIGTLN (76 aa). Residues histidine 570 and histidine 593 each contribute to the heme site. One can recognise an FAD-binding FR-type domain in the interval 638-749; sequence KYWSKAILET…KGPVGKFEYL (112 aa). FAD contacts are provided by residues 692–695, 709–713, 723–725, serine 773, and threonine 776; these read RAYT, LIKIY, and KMT.

This sequence belongs to the nitrate reductase family. In terms of assembly, homodimer. The cofactor is FAD. It depends on heme as a cofactor. Mo-molybdopterin is required as a cofactor.

The catalysed reaction is nitrite + NADP(+) + H2O = nitrate + NADPH + H(+). Nitrate reductase is a key enzyme involved in the first step of nitrate assimilation in plants, fungi and bacteria. This is Nitrate reductase [NADPH] (NIA) from Beauveria bassiana (White muscardine disease fungus).